We begin with the raw amino-acid sequence, 777 residues long: Transcriptional regulator QRICH1 (777 aa).

Residue Met1 is modified to N-acetylmethionine. The region spanning 6–48 is the CARD domain; it reads ENTISFEEYIRVKARSVPQHRMKEFLDSLASKGPEALQEFQQT. 2 disordered regions span residues 140–164 and 219–240; these read IQGQ…SPSQ and ALSP…VGTA. Residue Ser346 is modified to Phosphoserine. Residues Lys354 and Lys359 each participate in a glycyl lysine isopeptide (Lys-Gly) (interchain with G-Cter in SUMO2) cross-link. A disordered region spans residues 420–440; sequence QQQPQQQTAQEQTPPPQQQQQ. A Phosphoserine modification is found at Ser465.

In terms of tissue distribution, expressed highly in prefrontal cortex, craniofacial area and near the limbs of mouse embryos. Expressed in heart, skeletal muscle, liver, kidney, lung, brain, spleen, intestine and growth plate in mice.

The protein resides in the nucleus. It localises to the cytoplasm. Its subcellular location is the cell membrane. Its function is as follows. Transcriptional regulator that acts as a mediator of the integrated stress response (ISR) through transcriptional control of protein homeostasis under conditions of ER stress. Controls the outcome of the unfolded protein response (UPR), an ER-stress response pathway that either promotes recovery of ER homeostasis and cell survival, or triggers the terminal UPR which elicits programmed cell death when ER stress is prolonged and unresolved. ER stress induces QRICH1 translation by a ribosome translation re-initiation mechanism in response to EIF2S1/eIF-2-alpha phosphorylation, and stress-induced QRICH1 regulates a transcriptional program associated with protein translation, protein secretion-mediated proteotoxicity and cell death during the terminal UPR. May cooperate with ATF4 transcription factor signaling to regulate ER homeostasis which is critical for cell viability. Up-regulates CASP3/caspase-3 activity in epithelial cells under ER stress. Central regulator of proteotoxicity associated with ER stress-mediated inflammatory diseases in the intestines and liver. Involved in chondrocyte hypertrophy, a process required for normal longitudinal bone growth. This is Transcriptional regulator QRICH1 from Mus musculus (Mouse).